A 455-amino-acid polypeptide reads, in one-letter code: MKRENIKTILLTVLVVISLVFTWGIWTFQPNFSEGSSSTESTVRVKHKIEKTTQKLSETVRPRDMFIHDDGAHYKVDDNALYEEIWSDLPHWDVKGIKDISDQYDKAGFKSWFYGIGGSEAKLDLQFSDTIPIDIFQTLFKWSNQSFEYSSFDHILIPFNETKANKKIYLVSYSKQLILEVTVESANYRNIMNDLKNRQSNMPAFSLFSIGSKKEFLLPNKPLTMDKKEFVTESIKTNTFKQALFSDPSIVREDSNYNNRNVLTDGISRLDVNLSQRQVQFQQRNLVQSTSYQTGELIKKSQKYLEDTGSWTDHYQFFNINDSQQLSFYIFMDQIPVINSTAKPFGATSAITVQWANDDILSYKRPNYSLGTNPIKTSETELMGGSEVKMLLSKQTAYDTDKIDQIFLAYQLVSTSTNDDPLVELEPVWAMKVNGKIVPITKDLLRKEGANSGVE.

At 1–7 (MKRENIK) the chain is on the cytoplasmic side. The chain crosses the membrane as a helical span at residues 8–28 (TILLTVLVVISLVFTWGIWTF). Over 29-455 (QPNFSEGSSS…RKEGANSGVE (427 aa)) the chain is Extracellular. 5 residues coordinate Ca(2+): D69, D70, G115, G117, and S119.

In terms of assembly, homodimer. Interacts with WalK and YycI.

It is found in the cell membrane. Together with YycI, regulates the activity of the two-component system WalR/WalK. The protein is Two-component system WalR/WalK regulatory protein YycH (yycH) of Bacillus subtilis (strain 168).